A 102-amino-acid chain; its full sequence is Small ribosomal subunit protein uS10 (102 aa).

Belongs to the universal ribosomal protein uS10 family. Part of the 30S ribosomal subunit.

In terms of biological role, involved in the binding of tRNA to the ribosomes. The sequence is that of Small ribosomal subunit protein uS10 from Lactobacillus gasseri (strain ATCC 33323 / DSM 20243 / BCRC 14619 / CIP 102991 / JCM 1131 / KCTC 3163 / NCIMB 11718 / NCTC 13722 / AM63).